Reading from the N-terminus, the 604-residue chain is Glutamine--fructose-6-phosphate aminotransferase [isomerizing] (604 aa).

The Nucleophile; for GATase activity role is filled by Cys-2. A Glutamine amidotransferase type-2 domain is found at Cys-2–Asp-218. SIS domains are found at residues Ile-284–Lys-423 and Val-456–Pro-594. Lys-599 (for Fru-6P isomerization activity) is an active-site residue.

Homodimer.

The protein resides in the cytoplasm. It carries out the reaction D-fructose 6-phosphate + L-glutamine = D-glucosamine 6-phosphate + L-glutamate. Its function is as follows. Catalyzes the first step in hexosamine metabolism, converting fructose-6P into glucosamine-6P using glutamine as a nitrogen source. This Streptococcus pyogenes serotype M18 (strain MGAS8232) protein is Glutamine--fructose-6-phosphate aminotransferase [isomerizing].